The following is a 284-amino-acid chain: Tropomyosin beta chain (284 aa).

M1 is modified (N-acetylmethionine). A coiled-coil region spans residues 1–284; the sequence is MEAIKKKMQM…DNALNDITSL (284 aa). Basic and acidic residues-rich tracts occupy residues 22–40 and 51–66; these read AEQA…KQLE and KGTE…SVKE. The tract at residues 22-66 is disordered; it reads AEQAEADKKQAEDRCKQLEEEQQGLQKKLKGTEDEVEKYSESVKE.

Belongs to the tropomyosin family. In terms of assembly, homodimer. Heterodimer of an alpha (TPM1, TPM3 or TPM4) and a beta (TPM2) chain.

The protein localises to the cytoplasm. It is found in the cytoskeleton. In terms of biological role, binds to actin filaments in muscle and non-muscle cells. Plays a central role, in association with the troponin complex, in the calcium dependent regulation of vertebrate striated muscle contraction. Smooth muscle contraction is regulated by interaction with caldesmon. In non-muscle cells is implicated in stabilizing cytoskeleton actin filaments. The chain is Tropomyosin beta chain (TPM2) from Gallus gallus (Chicken).